The following is a 301-amino-acid chain: Syntaxin-17 (301 aa).

S2 carries the post-translational modification N-acetylserine. Residues S2–K227 lie on the Cytoplasmic side of the membrane. N6-acetyllysine is present on K41. Residues D49 to Q128 are a coiled coil. Y156 is modified (phosphotyrosine; by ABL1). Residues I161–A223 enclose the t-SNARE coiled-coil homology domain. A helical membrane pass occupies residues L228 to L248. A necessary and sufficient for localization to autophagosome region spans residues L228–I274. Topologically, residues L249–K253 are lumenal. The helical transmembrane segment at V254–I274 threads the bilayer. Residues L273–S301 are required for interaction with COPB1, TMED9 and TMED10. At Q275–S301 the chain is on the cytoplasmic side. The residue at position 288 (S288) is a Phosphoserine. The Endoplasmic reticulum retention signal motif lies at K298–S301.

Belongs to the syntaxin family. Forms a SNARE complex composed of VAMP8, SNAP29 and STX17 involved in fusion of autophagosome with lysosome. May interact with VAMP7. May interact with VTI1B. Probably interacts with BET1, SCFD1 and SEC22B. Interacts with PTPN2 and ABL1; involved in STX17 phosphorylation. Interacts with COPB1. Interacts with TMED9 and TMED10; the interaction is direct. Interacts with RUBCNL/PACER; promoting targeting of RUBCNL/PACER to autophagosome. Interacts with VAMP8, SNAP29, VPS39 and VPS41; these interactions are increased in the absence of TMEM39A. Interacts with IRGM; promoting STX17 recruitment to autophagosomes. Interacts with ATG8 proteins GABARAP and MAP1LC3B. Interacts with RNF115; this interaction enhances STX17 stability which in turn promotes autophagosome maturation. Interacts with RAB39A (GTP-bound); the interaction promotes autophagosome-lysosome membrane fusion driven by STX17-SNAP29-VAMP8. Interacts with RAB39B; the interaction may promote a different fonction in autophagy as compared with RAB39A. Post-translationally, phosphorylated at Tyr-156 probably by ABL1. Dephosphorylation by PTPN2; regulates exit from the endoplasmic reticulum. As to expression, detected in all tissues examined with higher expression in steroidogenic tissues including testis and adrenal gland (at protein level). Highly expressed in liver and testis. Also found in brain, heart, kidney, lung, placenta, skeletal muscle and spleen.

It localises to the endoplasmic reticulum membrane. Its subcellular location is the smooth endoplasmic reticulum membrane. It is found in the endoplasmic reticulum-Golgi intermediate compartment membrane. The protein localises to the cytoplasmic vesicle. The protein resides in the autophagosome membrane. It localises to the COPII-coated vesicle membrane. Its subcellular location is the cytoplasm. It is found in the cytosol. The protein localises to the mitochondrion membrane. The protein resides in the autolysosome membrane. Its function is as follows. SNAREs, soluble N-ethylmaleimide-sensitive factor-attachment protein receptors, are essential proteins for fusion of cellular membranes. SNAREs localized on opposing membranes assemble to form a trans-SNARE complex, an extended, parallel four alpha-helical bundle that drives membrane fusion. STX17 is a SNARE of the autophagosome involved in autophagy through the direct control of autophagosome membrane fusion with the lysosome membrane. May also play a role in the early secretory pathway where it may maintain the architecture of the endoplasmic reticulum-Golgi intermediate compartment/ERGIC and Golgi and/or regulate transport between the endoplasmic reticulum, the ERGIC and the Golgi. This is Syntaxin-17 from Rattus norvegicus (Rat).